The following is an 831-amino-acid chain: Translation initiation factor IF-2 (831 aa).

A tr-type G domain is found at 329-499 (TRAPVVTVMG…LLISEMQDLK (171 aa)). The tract at residues 338 to 345 (GHVDHGKT) is G1. Residue 338–345 (GHVDHGKT) participates in GTP binding. The segment at 363–367 (GITQH) is G2. Positions 385-388 (DTPG) are G3. GTP contacts are provided by residues 385-389 (DTPGH) and 439-442 (NKID). The G4 stretch occupies residues 439 to 442 (NKID). The interval 475 to 477 (SAL) is G5.

It belongs to the TRAFAC class translation factor GTPase superfamily. Classic translation factor GTPase family. IF-2 subfamily.

Its subcellular location is the cytoplasm. In terms of biological role, one of the essential components for the initiation of protein synthesis. Protects formylmethionyl-tRNA from spontaneous hydrolysis and promotes its binding to the 30S ribosomal subunits. Also involved in the hydrolysis of GTP during the formation of the 70S ribosomal complex. The chain is Translation initiation factor IF-2 from Rickettsia typhi (strain ATCC VR-144 / Wilmington).